Here is a 549-residue protein sequence, read N- to C-terminus: Chaperonin GroEL 2 (549 aa).

ATP is bound by residues 30 to 33 (TLGP), K51, 87 to 91 (DGTTT), G415, 479 to 481 (NAA), and D495.

Belongs to the chaperonin (HSP60) family. Forms a cylinder of 14 subunits composed of two heptameric rings stacked back-to-back. Interacts with the co-chaperonin GroES.

The protein resides in the cytoplasm. The catalysed reaction is ATP + H2O + a folded polypeptide = ADP + phosphate + an unfolded polypeptide.. Functionally, together with its co-chaperonin GroES, plays an essential role in assisting protein folding. The GroEL-GroES system forms a nano-cage that allows encapsulation of the non-native substrate proteins and provides a physical environment optimized to promote and accelerate protein folding. This is Chaperonin GroEL 2 from Polaromonas naphthalenivorans (strain CJ2).